The following is a 357-amino-acid chain: Pre-mRNA-splicing factor RBM22 homolog (357 aa).

The segment at 153–180 (RNMARVCSFWRKNSCNRGDECPYLHKEI) adopts a C3H1-type zinc-finger fold. In terms of domain architecture, RRM spans 222–295 (NKICIQGISE…CNLTVHLQDN (74 aa)).

This sequence belongs to the SLT11 family. As to quaternary structure, probable component of the spliceosome C complex.

The protein resides in the nucleus. Involved in pre-mRNA splicing. Binds RNA. This Plasmodium falciparum (isolate 3D7) protein is Pre-mRNA-splicing factor RBM22 homolog.